The primary structure comprises 185 residues: Hypoxanthine/guanine phosphoribosyltransferase (185 aa).

This sequence belongs to the purine/pyrimidine phosphoribosyltransferase family. Archaeal HPRT subfamily. As to quaternary structure, homodimer.

The protein localises to the cytoplasm. The enzyme catalyses IMP + diphosphate = hypoxanthine + 5-phospho-alpha-D-ribose 1-diphosphate. It carries out the reaction GMP + diphosphate = guanine + 5-phospho-alpha-D-ribose 1-diphosphate. It participates in purine metabolism; IMP biosynthesis via salvage pathway; IMP from hypoxanthine: step 1/1. Catalyzes a salvage reaction resulting in the formation of IMP that is energically less costly than de novo synthesis. This Methanococcus maripaludis (strain DSM 14266 / JCM 13030 / NBRC 101832 / S2 / LL) protein is Hypoxanthine/guanine phosphoribosyltransferase (hpt).